Reading from the N-terminus, the 237-residue chain is Urease accessory protein UreF (237 aa).

This sequence belongs to the UreF family. In terms of assembly, ureD, UreF and UreG form a complex that acts as a GTP-hydrolysis-dependent molecular chaperone, activating the urease apoprotein by helping to assemble the nickel containing metallocenter of UreC. The UreE protein probably delivers the nickel.

The protein resides in the cytoplasm. In terms of biological role, required for maturation of urease via the functional incorporation of the urease nickel metallocenter. In Streptococcus salivarius (strain 57.I), this protein is Urease accessory protein UreF.